A 266-amino-acid polypeptide reads, in one-letter code: Small ribosomal subunit protein uS2 (266 aa).

Residues 229 to 254 (RTSDKEADTTTEEVAQEEVTDTKADE) are disordered. Acidic residues predominate over residues 237–247 (TTTEEVAQEEV).

Belongs to the universal ribosomal protein uS2 family.

This Flavobacterium psychrophilum (strain ATCC 49511 / DSM 21280 / CIP 103535 / JIP02/86) protein is Small ribosomal subunit protein uS2.